A 591-amino-acid chain; its full sequence is Aspartate--tRNA ligase (591 aa).

Glutamate 174 lines the L-aspartate pocket. The segment at 198-201 (QLFK) is aspartate. Arginine 220 lines the L-aspartate pocket. Residues 220-222 (RDE) and glutamine 229 contribute to the ATP site. Histidine 450 contributes to the L-aspartate binding site. Glutamate 486 is an ATP binding site. Residue arginine 493 coordinates L-aspartate. Residue 538–541 (GLDR) participates in ATP binding.

Belongs to the class-II aminoacyl-tRNA synthetase family. Type 1 subfamily. As to quaternary structure, homodimer.

It localises to the cytoplasm. The enzyme catalyses tRNA(Asp) + L-aspartate + ATP = L-aspartyl-tRNA(Asp) + AMP + diphosphate. In terms of biological role, catalyzes the attachment of L-aspartate to tRNA(Asp) in a two-step reaction: L-aspartate is first activated by ATP to form Asp-AMP and then transferred to the acceptor end of tRNA(Asp). The polypeptide is Aspartate--tRNA ligase (Leuconostoc mesenteroides subsp. mesenteroides (strain ATCC 8293 / DSM 20343 / BCRC 11652 / CCM 1803 / JCM 6124 / NCDO 523 / NBRC 100496 / NCIMB 8023 / NCTC 12954 / NRRL B-1118 / 37Y)).